The chain runs to 696 residues: DNA-directed RNA polymerase subunit beta' (696 aa).

Zn(2+)-binding residues include Cys-69, Cys-71, Cys-87, and Cys-90. 3 residues coordinate Mg(2+): Asp-504, Asp-506, and Asp-508.

It belongs to the RNA polymerase beta' chain family. RpoC1 subfamily. In plastids the minimal PEP RNA polymerase catalytic core is composed of four subunits: alpha, beta, beta', and beta''. When a (nuclear-encoded) sigma factor is associated with the core the holoenzyme is formed, which can initiate transcription. It depends on Mg(2+) as a cofactor. Zn(2+) serves as cofactor.

The protein resides in the plastid. It localises to the chloroplast. The catalysed reaction is RNA(n) + a ribonucleoside 5'-triphosphate = RNA(n+1) + diphosphate. Its function is as follows. DNA-dependent RNA polymerase catalyzes the transcription of DNA into RNA using the four ribonucleoside triphosphates as substrates. This chain is DNA-directed RNA polymerase subunit beta', found in Pinus koraiensis (Korean pine).